A 223-amino-acid chain; its full sequence is N-(5'-phosphoribosyl)anthranilate isomerase (223 aa).

It belongs to the TrpF family.

It carries out the reaction N-(5-phospho-beta-D-ribosyl)anthranilate = 1-(2-carboxyphenylamino)-1-deoxy-D-ribulose 5-phosphate. It functions in the pathway amino-acid biosynthesis; L-tryptophan biosynthesis; L-tryptophan from chorismate: step 3/5. The sequence is that of N-(5'-phosphoribosyl)anthranilate isomerase from Moorella thermoacetica (strain ATCC 39073 / JCM 9320).